Here is a 279-residue protein sequence, read N- to C-terminus: uncharacterized protein (279 aa).

One can recognise a Reverse transcriptase domain in the interval methionine 1 to isoleucine 87.

This is an uncharacterized protein from Caenorhabditis elegans.